The primary structure comprises 650 residues: NAC domain-containing protein 54 (650 aa).

Residues 6–156 (LPPGFRFHPT…AYALCRVFKK (151 aa)) form the NAC domain. The DNA-binding element occupies 105–162 (VGMKKTLVYYRGRAPHGSRTDWVMHEYRLDERECETDTGLQDAYALCRVFKKTAPGPK).

As to expression, expressed in leaves, roots and flowers.

It localises to the nucleus. Functionally, transcription factor that functions as a regulator of the jasmonate (JA) signaling pathway. May regulate the expression of genes encoding JA biosynthetic enzymes, such as lipoxygenase 7 (CM-LOX1), allene oxide synthase 2 (AOS2) and OPDA reductase 7 (OPR7). Involved in abscisic acid-induced leaf senescence. Activates the abscisic acid (ABA) signaling-associated gene ABI5 and the senescence-associated gene NYC1 by directly binding to the mitochondrial dysfunction motif (MDM) present in their promoters. Possesses transcriptional activator activity in yeast. Required for the multiplication of the rice dwarf virus (RDV). The protein is NAC domain-containing protein 54 of Oryza sativa subsp. japonica (Rice).